Consider the following 385-residue polypeptide: Protein pelota homolog (385 aa).

A Glycyl lysine isopeptide (Lys-Gly) (interchain with G-Cter in SUMO2) cross-link involves residue lysine 162. Phosphoserine occurs at positions 374, 380, 381, and 382.

Belongs to the eukaryotic release factor 1 family. Pelota subfamily. In terms of assembly, component of the Pelota-HBS1L complex, also named Dom34-Hbs1 complex, composed of PELO and HBS1L. Interacts with PINK1. Interacts with ABCE1. Interacts with CNOT4. A divalent metal cation is required as a cofactor.

It localises to the cytoplasm. Component of the Pelota-HBS1L complex, a complex that recognizes stalled ribosomes and triggers the No-Go Decay (NGD) pathway. In the Pelota-HBS1L complex, PELO recognizes ribosomes stalled at the 3' end of an mRNA and engages stalled ribosomes by destabilizing mRNA in the mRNA channel. Following mRNA extraction from stalled ribosomes by the SKI complex, the Pelota-HBS1L complex promotes recruitment of ABCE1, which drives the disassembly of stalled ribosomes, followed by degradation of damaged mRNAs as part of the NGD pathway. As part of the PINK1-regulated signaling, upon mitochondrial damage is recruited to the ribosome/mRNA-ribonucleoprotein complex associated to mitochondrial outer membrane thereby enabling the recruitment of autophagy receptors and induction of mitophagy. The chain is Protein pelota homolog (Pelo) from Rattus norvegicus (Rat).